A 102-amino-acid polypeptide reads, in one-letter code: Small ribosomal subunit protein eS24 (102 aa).

The protein belongs to the eukaryotic ribosomal protein eS24 family.

This chain is Small ribosomal subunit protein eS24, found in Methanococcus maripaludis (strain C5 / ATCC BAA-1333).